Reading from the N-terminus, the 196-residue chain is CRISPR-associated exonuclease Cas4 (196 aa).

Cys23 is a [4Fe-4S] cluster binding site. Mn(2+) contacts are provided by His50, Asp90, and Glu103. Positions 184, 187, and 193 each coordinate [4Fe-4S] cluster.

Belongs to the CRISPR-associated exonuclease Cas4 family. Mg(2+) is required as a cofactor. The cofactor is [4Fe-4S] cluster.

It catalyses the reaction exonucleolytic cleavage in the 5'- to 3'-direction to yield nucleoside 3'-phosphates.. CRISPR (clustered regularly interspaced short palindromic repeat) is an adaptive immune system that provides protection against mobile genetic elements (viruses, transposable elements and conjugative plasmids). CRISPR clusters contain sequences complementary to antecedent mobile elements and target invading nucleic acids. CRISPR clusters are transcribed and processed into CRISPR RNA (crRNA). This may be a 5' to 3' ssDNA exonuclease. This is CRISPR-associated exonuclease Cas4 from Francisella tularensis subsp. novicida (strain U112).